Here is a 211-residue protein sequence, read N- to C-terminus: Protein-L-isoaspartate O-methyltransferase (211 aa).

S62 is an active-site residue.

The protein belongs to the methyltransferase superfamily. L-isoaspartyl/D-aspartyl protein methyltransferase family.

It localises to the cytoplasm. It carries out the reaction [protein]-L-isoaspartate + S-adenosyl-L-methionine = [protein]-L-isoaspartate alpha-methyl ester + S-adenosyl-L-homocysteine. Its function is as follows. Catalyzes the methyl esterification of L-isoaspartyl residues in peptides and proteins that result from spontaneous decomposition of normal L-aspartyl and L-asparaginyl residues. It plays a role in the repair and/or degradation of damaged proteins. This Shewanella putrefaciens (strain CN-32 / ATCC BAA-453) protein is Protein-L-isoaspartate O-methyltransferase.